The sequence spans 485 residues: Aspartyl/glutamyl-tRNA(Asn/Gln) amidotransferase subunit B (485 aa).

This sequence belongs to the GatB/GatE family. GatB subfamily. In terms of assembly, heterotrimer of A, B and C subunits.

The catalysed reaction is L-glutamyl-tRNA(Gln) + L-glutamine + ATP + H2O = L-glutaminyl-tRNA(Gln) + L-glutamate + ADP + phosphate + H(+). It carries out the reaction L-aspartyl-tRNA(Asn) + L-glutamine + ATP + H2O = L-asparaginyl-tRNA(Asn) + L-glutamate + ADP + phosphate + 2 H(+). In terms of biological role, allows the formation of correctly charged Asn-tRNA(Asn) or Gln-tRNA(Gln) through the transamidation of misacylated Asp-tRNA(Asn) or Glu-tRNA(Gln) in organisms which lack either or both of asparaginyl-tRNA or glutaminyl-tRNA synthetases. The reaction takes place in the presence of glutamine and ATP through an activated phospho-Asp-tRNA(Asn) or phospho-Glu-tRNA(Gln). The chain is Aspartyl/glutamyl-tRNA(Asn/Gln) amidotransferase subunit B from Borreliella afzelii (strain PKo) (Borrelia afzelii).